Consider the following 216-residue polypeptide: MSCLPALDKFLQNYHQSYLSTLGELPRYYPQGEPSLCIQGEFDESSDEAVSWLPVKREQLGSFANVEHALELTLWPDINHFYGEYFAAPVLFDSPWGTGELLQVWNEADFDALQQNIIGHLMMKQKLKQPATWFIGLLDEGDKMLTVDNADGSVWVEIPGELPSTQLAPSLAEFIEALSPRIAPPVKHEELPMPALEHPGIFASFKRMWHNLIGKR.

This sequence belongs to the Syd family.

The protein localises to the cell inner membrane. Its function is as follows. Interacts with the SecY protein in vivo. May bind preferentially to an uncomplexed state of SecY, thus functioning either as a chelating agent for excess SecY in the cell or as a regulatory factor that negatively controls the translocase function. This is Protein Syd from Shewanella sp. (strain MR-7).